The primary structure comprises 218 residues: Albicidin resistance protein (218 aa).

It is found in the periplasm. In terms of biological role, albicidin resistance protein binds to form a complex without antibiotic activity but without catalyzing any further chemical modifications to albicidin. This chain is Albicidin resistance protein, found in Klebsiella oxytoca.